Reading from the N-terminus, the 267-residue chain is Phosphatidylglycerol--prolipoprotein diacylglyceryl transferase (267 aa).

Transmembrane regions (helical) follow at residues 20–40, 57–77, 88–108, and 117–137; these read LEIR…VYLA, FILI…VAFS, IFAI…GAIV, and FINT…AQAI. Residue R139 participates in a 1,2-diacyl-sn-glycero-3-phospho-(1'-sn-glycerol) binding. 3 helical membrane passes run 175–195, 205–225, and 235–255; these read QPTF…VCVL, GEIT…IEGL, and IRVS…MVVL.

The protein belongs to the Lgt family.

It localises to the cell membrane. It carries out the reaction L-cysteinyl-[prolipoprotein] + a 1,2-diacyl-sn-glycero-3-phospho-(1'-sn-glycerol) = an S-1,2-diacyl-sn-glyceryl-L-cysteinyl-[prolipoprotein] + sn-glycerol 1-phosphate + H(+). It functions in the pathway protein modification; lipoprotein biosynthesis (diacylglyceryl transfer). Catalyzes the transfer of the diacylglyceryl group from phosphatidylglycerol to the sulfhydryl group of the N-terminal cysteine of a prolipoprotein, the first step in the formation of mature lipoproteins. In Streptococcus suis (strain 98HAH33), this protein is Phosphatidylglycerol--prolipoprotein diacylglyceryl transferase.